The following is a 191-amino-acid chain: Pyridoxal 5'-phosphate synthase subunit PdxT (191 aa).

52-54 (GES) contributes to the L-glutamine binding site. Catalysis depends on cysteine 81, which acts as the Nucleophile. L-glutamine-binding positions include arginine 108 and 136-137 (IR). Catalysis depends on charge relay system residues histidine 172 and glutamate 174.

This sequence belongs to the glutaminase PdxT/SNO family. In terms of assembly, in the presence of PdxS, forms a dodecamer of heterodimers. Only shows activity in the heterodimer.

It catalyses the reaction aldehydo-D-ribose 5-phosphate + D-glyceraldehyde 3-phosphate + L-glutamine = pyridoxal 5'-phosphate + L-glutamate + phosphate + 3 H2O + H(+). The catalysed reaction is L-glutamine + H2O = L-glutamate + NH4(+). The protein operates within cofactor biosynthesis; pyridoxal 5'-phosphate biosynthesis. Catalyzes the hydrolysis of glutamine to glutamate and ammonia as part of the biosynthesis of pyridoxal 5'-phosphate. The resulting ammonia molecule is channeled to the active site of PdxS. This Actinobacillus pleuropneumoniae serotype 5b (strain L20) protein is Pyridoxal 5'-phosphate synthase subunit PdxT.